A 648-amino-acid chain; its full sequence is SRSF protein kinase 1 (648 aa).

Residues 1–57 (MERKVLALQARKKRTKAKKDKAQRKPETQHRGSAPHSESDIPEQEEEILGSDDDEQE) are disordered. Over residues 10 to 22 (ARKKRTKAKKDKA) the composition is skewed to basic residues. The segment covering 40–57 (DIPEQEEEILGSDDDEQE) has biased composition (acidic residues). Residue serine 51 is modified to Phosphoserine. The Protein kinase domain maps to 80-646 (YHVIRKLGWG…AAECLRHPWL (567 aa)). ATP contacts are provided by residues 86–94 (LGWGHFSTV) and lysine 109. Residue aspartate 213 is the Proton acceptor of the active site. Disordered stretches follow at residues 238–354 (WQRS…APEI) and 395–464 (PSFL…DSKG). The span at 265-276 (KNKKKKLKKKQK) shows a compositional bias: basic residues. Basic and acidic residues-rich tracts occupy residues 277–288 (RQAELLEKRMQE) and 304–317 (NKQE…DRPL). Residues serine 309, serine 311, and serine 333 each carry the phosphoserine modification. 2 stretches are compositionally biased toward polar residues: residues 333–343 (SNSIGQDQTLT) and 396–441 (SFLN…TQLE). Threonine 448 bears the Phosphothreonine mark. The residue at position 450 (serine 450) is a Phosphoserine. Serine 548 is subject to Phosphoserine; by CK2.

Belongs to the protein kinase superfamily. CMGC Ser/Thr protein kinase family. In terms of assembly, monomer. Found in a multisubunit complex containing seven proteins, named toposome, which separates entangled circular chromatin DNA during chromosome segregation. Interacts with HHV-1 ICP27 protein. Interacts with DNAJC8 and AHSA1/AHA1 and this mediates formation of a complex with the Hsp70 /Hsp90 machinery. Binds to IGF2BP1, SYNCRIP, HNRNPA2B1 and HNRNPC. Interacts with SAFB/SAFB1 and SAFB2 which inhibits its activity. Requires Mg(2+) as cofactor. Predominantly expressed in the testis but is also present at lower levels in heart, spleen, liver, brain, kidney, lung and skeletal muscle. Present in all germinal cells in the seminiferous tubules but not in mature spermatozoa.

The protein resides in the cytoplasm. The protein localises to the nucleus. Its subcellular location is the nucleoplasm. It is found in the nucleus matrix. It localises to the microsome. The protein resides in the nucleus speckle. The protein localises to the chromosome. It catalyses the reaction L-seryl-[protein] + ATP = O-phospho-L-seryl-[protein] + ADP + H(+). The catalysed reaction is L-threonyl-[protein] + ATP = O-phospho-L-threonyl-[protein] + ADP + H(+). Its activity is regulated as follows. Activated by phosphorylation on Ser-51 and Ser-548. In terms of biological role, serine/arginine-rich protein-specific kinase which specifically phosphorylates its substrates at serine residues located in regions rich in arginine/serine dipeptides, known as RS domains and is involved in the phosphorylation of SR splicing factors and the regulation of splicing. Plays a central role in the regulatory network for splicing, controlling the intranuclear distribution of splicing factors in interphase cells and the reorganization of nuclear speckles during mitosis. Can influence additional steps of mRNA maturation, as well as other cellular activities, such as chromatin reorganization in somatic and sperm cells and cell cycle progression. Phosphorylates SFRS2, ZRSR2, LBR and PRM1. Phosphorylates SRSF1 using a directional (C-terminal to N-terminal) and a dual-track mechanism incorporating both processive phosphorylation (in which the kinase stays attached to the substrate after each round of phosphorylation) and distributive phosphorylation steps (in which the kinase and substrate dissociate after each phosphorylation event). The RS domain of SRSF1 binds first to a docking groove in the large lobe of the kinase domain of SRPK1. This induces certain structural changes in SRPK1 and/or RRM2 domain of SRSF1, allowing RRM2 to bind the kinase and initiate phosphorylation. The cycles continue for several phosphorylation steps in a processive manner (steps 1-8) until the last few phosphorylation steps (approximately steps 9-12). During that time, a mechanical stress induces the unfolding of the beta-4 motif in RRM2, which then docks at the docking groove of SRPK1. This also signals RRM2 to begin to dissociate, which facilitates SRSF1 dissociation after phosphorylation is completed. Can mediate hepatitis B virus (HBV) core protein phosphorylation. It plays a negative role in the regulation of HBV replication through a mechanism not involving the phosphorylation of the core protein but by reducing the packaging efficiency of the pregenomic RNA (pgRNA) without affecting the formation of the viral core particles. Can induce splicing of exon 10 in MAPT/TAU. The polypeptide is SRSF protein kinase 1 (Mus musculus (Mouse)).